The following is a 178-amino-acid chain: Large ribosomal subunit protein uL6 (178 aa).

It belongs to the universal ribosomal protein uL6 family. Part of the 50S ribosomal subunit.

This protein binds to the 23S rRNA, and is important in its secondary structure. It is located near the subunit interface in the base of the L7/L12 stalk, and near the tRNA binding site of the peptidyltransferase center. The sequence is that of Large ribosomal subunit protein uL6 from Francisella tularensis subsp. novicida (strain U112).